A 461-amino-acid polypeptide reads, in one-letter code: Protein DVR-1 homolog (461 aa).

The signal sequence occupies residues 1–30; sequence MEYSRKTYLDLNIMAKYILILSLFFGPGLS. The propeptide occupies 31-338; the sequence is WDVFYSGDED…QKKGGKRPRK (308 aa). A glycan (N-linked (GlcNAc...) asparagine) is linked at Asn-149. Positions 317–351 are disordered; that stretch reads SHLRRNRRAATRQKKGGKRPRKPDTDNDIASRDSA. Residues 318–337 show a composition bias toward basic residues; that stretch reads HLRRNRRAATRQKKGGKRPR. The segment covering 338 to 347 has biased composition (basic and acidic residues); that stretch reads KPDTDNDIAS. 3 disulfide bridges follow: Cys-360/Cys-426, Cys-389/Cys-458, and Cys-393/Cys-460. A glycan (N-linked (GlcNAc...) asparagine) is linked at Asn-402.

The protein belongs to the TGF-beta family. Homodimer; disulfide-linked.

The protein localises to the secreted. The sequence is that of Protein DVR-1 homolog (DVR1) from Strongylocentrotus purpuratus (Purple sea urchin).